We begin with the raw amino-acid sequence, 290 residues long: Ubiquinone biosynthesis protein COQ4, mitochondrial (290 aa).

The transit peptide at 1–32 (MAKRVCVGDLRKLAGSVSTPSRCILPPHARCF) directs the protein to the mitochondrion. The Zn(2+) site is built by histidine 168, aspartate 169, histidine 172, and glutamate 184. Positions 260–290 (KPPDLREMRKAEREAQKKDKEAKETMTRAAV) are disordered.

The protein belongs to the COQ4 family. Component of a multi-subunit COQ enzyme complex, composed of at least COQ3, COQ4, COQ5, COQ6, COQ7 and COQ9. Zn(2+) is required as a cofactor.

The protein resides in the mitochondrion inner membrane. It catalyses the reaction a 4-hydroxy-3-methoxy-5-(all-trans-polyprenyl)benzoate + H(+) = a 2-methoxy-6-(all-trans-polyprenyl)phenol + CO2. The protein operates within cofactor biosynthesis; ubiquinone biosynthesis. Lyase that catalyzes the C1-decarboxylation of 4-hydroxy-3-methoxy-5-(all-trans-polyprenyl)benzoic acid into 2-methoxy-6-(all-trans-polyprenyl)phenol during ubiquinone biosynthesis. The polypeptide is Ubiquinone biosynthesis protein COQ4, mitochondrial (Phaeosphaeria nodorum (strain SN15 / ATCC MYA-4574 / FGSC 10173) (Glume blotch fungus)).